An 84-amino-acid chain; its full sequence is Large ribosomal subunit protein bL27 (84 aa).

A disordered region spans residues 1-20 (MAHKKGGGSTKNGRDSNPKY).

This sequence belongs to the bacterial ribosomal protein bL27 family.

The protein is Large ribosomal subunit protein bL27 of Chlorobaculum tepidum (strain ATCC 49652 / DSM 12025 / NBRC 103806 / TLS) (Chlorobium tepidum).